The primary structure comprises 472 residues: MTDPRILSLQQAVPALRLKTEPADLEHYGRDWTRRWTPNPLAIALPGSVEEVQAVVRWANAQAVAVVPSGGRTGLSGGAVAANGELVLSLERLNKPLDFNAVDRTLTVQAGMPLEAVHNAAREQGLVYPVDFAARGSCSIGGNIATNAGGIRVIRYGNTREWVAGLKVVTGSGELLELNNALVKNSSGYDFRHLMIGSEGTLGIVVEATLRLTDPPPPSNVMLLALPSFDVLMQVFAAFRAQLRLEAFEFFTDRALEHVLAHGAQAPFAEIHPYYVVTEFAAGDEAQEAAAMAAFETCMEQGWVSDGVISQSDAQAAQLWRLREGITEALARYTPYKNDVSVRISAMPAFLAETQALLHDAYPDFDVVWFGHIGDGNLHINVLKPDATSQADFVAACDQVTKLLAQALQRFDGSISAEHGIGLVKKSYLWSTRSAEEIALMRGIKHVLDPHLLLNPGKLFETHDAPTNIPAG.

Positions 36 to 215 (WTPNPLAIAL…VEATLRLTDP (180 aa)) constitute an FAD-binding PCMH-type domain. Arginine 323, threonine 327, and lysine 337 together coordinate (R)-2-hydroxyglutarate. (R)-malate contacts are provided by arginine 323, threonine 327, and lysine 337. Residues histidine 372 and histidine 379 each contribute to the Zn(2+) site. Residue asparagine 381 participates in (R)-2-hydroxyglutarate binding. Position 418 (glutamate 418) interacts with Zn(2+). Histidine 419 contributes to the (R)-2-hydroxyglutarate binding site. Histidine 419 provides a ligand contact to (R)-malate.

It belongs to the FAD-binding oxidoreductase/transferase type 4 family. Homodimer. It depends on FAD as a cofactor.

The catalysed reaction is (R)-2-hydroxyglutarate + A = 2-oxoglutarate + AH2. The enzyme catalyses (R)-malate + A = oxaloacetate + AH2. Activated by Zn(2+) ions. Catalyzes the dehydrogenation of (R)-2-hydroxyglutarate (D-2-hydroxyglutarate) to 2-oxoglutarate. Also has a low activity on D-malate in vitro. Is functionally tied to L-serine biosynthesis, via its coupling with the D-3-phosphoglycerate dehydrogenase SerA, encoded by the adjacent gene in the locus. Active in vitro with the artificial electron acceptor 2,6-dichlorophenolindophenol (DCPIP), but not with NAD, NADP, or cytochrome c. Also displays a very low oxidase activity in vitro on D-2-hydroxyglutarate and L-2-hydroxyglutarate with O2 as the electron acceptor, but this activity is most likely not physiological. The chain is D-2-hydroxyglutarate dehydrogenase from Xanthomonas citri pv. viticola (strain LMG 965 / NCPPB 2475 / ICMP 3867 / CFBP 7660) (Xanthomonas campestris pv. viticola).